The chain runs to 706 residues: GDNF-inducible zinc finger protein 1 (706 aa).

One can recognise a BTB domain in the interval 31 to 103; the sequence is CDVTVSIENQ…VYTAKVRVEE (73 aa). Over residues 149 to 165 the composition is skewed to polar residues; that stretch reads VEASSGPQVSVTPSSKA. Disordered stretches follow at residues 149-220 and 242-308; these read VEAS…PKIR and RRLR…KDGE. Composition is skewed to basic and acidic residues over residues 197–212 and 242–277; these read PSKKCKEKLDKKKDVA and RRLREQQKSAEEAAENDKCPQDQSPDNERMETEPAA. 10 C2H2-type zinc fingers span residues 315–337, 346–369, 375–398, 405–427, 433–455, 461–483, 489–511, 517–539, 545–567, and 573–595; these read FQCTVCDKAFLYEKSFLKHIKYH, YRCDTCGQTFANRCNLKSHQRHVH, FPCEMCAKKFKRKKDVKRHVLQVH, HRCGQCGKGLSSKTALRLHERTH, YGCTKCDAKFSQPSALKTHLRVH, FVCDECGARFTQNHMLIYHKRCH, FMCETCGKSFASKEYLKHHNRIH, FKCEVCLRTFAQRNSLYQHIKVH, YCCDQCGKQFTQVNALQRHHRIH, and YMCNACGRTFTDKSTLRRHTSIH. Residue Ser-611 is modified to Phosphoserine.

It belongs to the krueppel C2H2-type zinc-finger protein family. Interacts with NCL. Expressed in several tissues, with highest levels in liver. Also expressed in embryos from 7 to 17 dpc.

The protein localises to the nucleus. The protein resides in the cytoplasm. It localises to the nucleolus. Functionally, transcriptional repressor that binds the GZF1 responsive element (GRE) (consensus: 5'-TGCGCN[TG][CA]TATA-3'). May be regulating VSX2/HOX10 expression. This Mus musculus (Mouse) protein is GDNF-inducible zinc finger protein 1.